Here is a 473-residue protein sequence, read N- to C-terminus: Lactate utilization protein B (473 aa).

4Fe-4S ferredoxin-type domains lie at 302 to 332 (GSEF…GHSY) and 351 to 380 (YDDY…LHDL). [4Fe-4S] cluster-binding residues include Cys311, Cys314, Cys317, Cys321, Cys364, Cys367, and Cys371.

The protein belongs to the LutB/YkgF family.

Functionally, is involved in L-lactate degradation and allows cells to grow with lactate as the sole carbon source. Has probably a role as an electron transporter during oxidation of L-lactate. The sequence is that of Lactate utilization protein B from Bacillus cereus (strain G9842).